Consider the following 401-residue polypeptide: Acetate kinase (401 aa).

Asn-9 contributes to the Mg(2+) binding site. Lys-16 lines the ATP pocket. Arg-88 is a substrate binding site. Asp-147 (proton donor/acceptor) is an active-site residue. ATP is bound by residues 207-211 (HLGNG), 282-284 (DCR), and 333-337 (GIGEN). Glu-388 lines the Mg(2+) pocket.

This sequence belongs to the acetokinase family. In terms of assembly, homodimer. Mg(2+) serves as cofactor. Requires Mn(2+) as cofactor.

The protein localises to the cytoplasm. It carries out the reaction acetate + ATP = acetyl phosphate + ADP. It participates in metabolic intermediate biosynthesis; acetyl-CoA biosynthesis; acetyl-CoA from acetate: step 1/2. Its function is as follows. Catalyzes the formation of acetyl phosphate from acetate and ATP. Can also catalyze the reverse reaction. The sequence is that of Acetate kinase from Haemophilus influenzae (strain 86-028NP).